Consider the following 729-residue polypeptide: Phosphoribosylformylglycinamidine synthase subunit PurL (729 aa).

H54 is an active-site residue. Residues Y57 and K96 each contribute to the ATP site. Residue E98 coordinates Mg(2+). Substrate is bound by residues 99-102 and R121; that span reads SHNH. The active-site Proton acceptor is H100. Residue D122 participates in Mg(2+) binding. Q245 contributes to the substrate binding site. Residue D273 participates in Mg(2+) binding. 317–319 provides a ligand contact to substrate; sequence ETQ. D495 and G532 together coordinate ATP. N533 serves as a coordination point for Mg(2+). S535 is a substrate binding site.

The protein belongs to the FGAMS family. As to quaternary structure, monomer. Part of the FGAM synthase complex composed of 1 PurL, 1 PurQ and 2 PurS subunits.

Its subcellular location is the cytoplasm. It catalyses the reaction N(2)-formyl-N(1)-(5-phospho-beta-D-ribosyl)glycinamide + L-glutamine + ATP + H2O = 2-formamido-N(1)-(5-O-phospho-beta-D-ribosyl)acetamidine + L-glutamate + ADP + phosphate + H(+). It functions in the pathway purine metabolism; IMP biosynthesis via de novo pathway; 5-amino-1-(5-phospho-D-ribosyl)imidazole from N(2)-formyl-N(1)-(5-phospho-D-ribosyl)glycinamide: step 1/2. Functionally, part of the phosphoribosylformylglycinamidine synthase complex involved in the purines biosynthetic pathway. Catalyzes the ATP-dependent conversion of formylglycinamide ribonucleotide (FGAR) and glutamine to yield formylglycinamidine ribonucleotide (FGAM) and glutamate. The FGAM synthase complex is composed of three subunits. PurQ produces an ammonia molecule by converting glutamine to glutamate. PurL transfers the ammonia molecule to FGAR to form FGAM in an ATP-dependent manner. PurS interacts with PurQ and PurL and is thought to assist in the transfer of the ammonia molecule from PurQ to PurL. This is Phosphoribosylformylglycinamidine synthase subunit PurL from Staphylococcus epidermidis (strain ATCC 35984 / DSM 28319 / BCRC 17069 / CCUG 31568 / BM 3577 / RP62A).